We begin with the raw amino-acid sequence, 158 residues long: Nucleoside diphosphate kinase (158 aa).

ATP-binding residues include Lys-16, Phe-64, Arg-92, Thr-98, Arg-109, and Asn-119. The active-site Pros-phosphohistidine intermediate is His-122.

Belongs to the NDK family. Mg(2+) is required as a cofactor.

Its subcellular location is the cytoplasm. The enzyme catalyses a 2'-deoxyribonucleoside 5'-diphosphate + ATP = a 2'-deoxyribonucleoside 5'-triphosphate + ADP. It catalyses the reaction a ribonucleoside 5'-diphosphate + ATP = a ribonucleoside 5'-triphosphate + ADP. Major role in the synthesis of nucleoside triphosphates other than ATP. The ATP gamma phosphate is transferred to the NDP beta phosphate via a ping-pong mechanism, using a phosphorylated active-site intermediate. This is Nucleoside diphosphate kinase from Haloquadratum walsbyi (strain DSM 16790 / HBSQ001).